Consider the following 128-residue polypeptide: ATP synthase epsilon chain (128 aa).

This sequence belongs to the ATPase epsilon chain family. F-type ATPases have 2 components, CF(1) - the catalytic core - and CF(0) - the membrane proton channel. CF(1) has five subunits: alpha(3), beta(3), gamma(1), delta(1), epsilon(1). CF(0) has three main subunits: a, b and c.

Its subcellular location is the cell inner membrane. Produces ATP from ADP in the presence of a proton gradient across the membrane. The chain is ATP synthase epsilon chain from Sulfurovum sp. (strain NBC37-1).